A 752-amino-acid polypeptide reads, in one-letter code: Phosphoribosylformylglycinamidine synthase subunit PurL (752 aa).

The active site involves H58. ATP-binding residues include Y61 and K103. E105 serves as a coordination point for Mg(2+). Substrate is bound by residues 106-109 (SHNH) and R128. Residue H107 is the Proton acceptor of the active site. D129 contacts Mg(2+). Q253 serves as a coordination point for substrate. Residue D281 coordinates Mg(2+). 325 to 327 (ESQ) provides a ligand contact to substrate. ATP contacts are provided by D513 and G550. N551 provides a ligand contact to Mg(2+). Residue S553 participates in substrate binding.

Belongs to the FGAMS family. In terms of assembly, monomer. Part of the FGAM synthase complex composed of 1 PurL, 1 PurQ and 2 PurS subunits.

The protein localises to the cytoplasm. It carries out the reaction N(2)-formyl-N(1)-(5-phospho-beta-D-ribosyl)glycinamide + L-glutamine + ATP + H2O = 2-formamido-N(1)-(5-O-phospho-beta-D-ribosyl)acetamidine + L-glutamate + ADP + phosphate + H(+). It participates in purine metabolism; IMP biosynthesis via de novo pathway; 5-amino-1-(5-phospho-D-ribosyl)imidazole from N(2)-formyl-N(1)-(5-phospho-D-ribosyl)glycinamide: step 1/2. Functionally, part of the phosphoribosylformylglycinamidine synthase complex involved in the purines biosynthetic pathway. Catalyzes the ATP-dependent conversion of formylglycinamide ribonucleotide (FGAR) and glutamine to yield formylglycinamidine ribonucleotide (FGAM) and glutamate. The FGAM synthase complex is composed of three subunits. PurQ produces an ammonia molecule by converting glutamine to glutamate. PurL transfers the ammonia molecule to FGAR to form FGAM in an ATP-dependent manner. PurS interacts with PurQ and PurL and is thought to assist in the transfer of the ammonia molecule from PurQ to PurL. In Streptomyces coelicolor (strain ATCC BAA-471 / A3(2) / M145), this protein is Phosphoribosylformylglycinamidine synthase subunit PurL.